The sequence spans 173 residues: Ribosome maturation factor RimP (173 aa).

The protein belongs to the RimP family.

Its subcellular location is the cytoplasm. In terms of biological role, required for maturation of 30S ribosomal subunits. In Chlorobaculum tepidum (strain ATCC 49652 / DSM 12025 / NBRC 103806 / TLS) (Chlorobium tepidum), this protein is Ribosome maturation factor RimP.